The sequence spans 474 residues: Mitogen-activated protein kinase pmk-3 (474 aa).

The span at 1-13 (MASVPSSSSLPVS) shows a compositional bias: low complexity. The segment at 1–90 (MASVPSSSSL…EEEEDILSKP (90 aa)) is disordered. Residues 30 to 48 (KRSNNQSQPPESYEPNTWL) show a composition bias toward polar residues. Positions 52-69 (REQEQQKKLAAENIKKQS) are enriched in basic and acidic residues. The Protein kinase domain occupies 114-419 (YDVEPNSIEY…VEEAIQHPYL (306 aa)). Residues 124–132 (LGGGSFGNV) and Lys150 contribute to the ATP site. Asp252 acts as the Proton acceptor in catalysis. A Phosphothreonine modification is found at Thr285. A TXY motif is present at residues 285 to 287 (TQY). Tyr287 carries the phosphotyrosine modification.

It belongs to the protein kinase superfamily. CMGC Ser/Thr protein kinase family. MAP kinase subfamily. Interacts with mak-2. May interact with vhp-1. May interact with uev-3. The cofactor is Mg(2+). In terms of processing, dually phosphorylated on Thr-285 and Tyr-287, which activates the enzyme. Expressed throughout the intestine.

Its subcellular location is the nucleus. It is found in the cytoplasm. It localises to the cell projection. The protein resides in the axon. The protein localises to the dendrite. Its subcellular location is the cilium. It catalyses the reaction L-seryl-[protein] + ATP = O-phospho-L-seryl-[protein] + ADP + H(+). The catalysed reaction is L-threonyl-[protein] + ATP = O-phospho-L-threonyl-[protein] + ADP + H(+). Activated by phosphorylation on threonine and tyrosine. In terms of biological role, responds to activation by environmental stress and pro-inflammatory cytokines by phosphorylating downstream targets. Involved in axon regeneration after injury, probably downstream of dlk-1 and mkk-4 and upstream of mak-2. May phosphorylate mak-2. Plays a role in cilium length regulation, possibly by reducing rab-5 mediated endocytosis. Plays a role in the formation of muscle connections, also called muscle arm extensions, between the body wall and the motor axons in the dorsal and ventral cord. The protein is Mitogen-activated protein kinase pmk-3 (pmk-3) of Caenorhabditis elegans.